Consider the following 138-residue polypeptide: Small ribosomal subunit protein bS6 (138 aa).

The segment at 94-138 (VKQDGPLPTPKPTSKEDETEKEEVKPTEDKTESPAQEEKKEDSKE) is disordered. Over residues 106–138 (TSKEDETEKEEVKPTEDKTESPAQEEKKEDSKE) the composition is skewed to basic and acidic residues.

This sequence belongs to the bacterial ribosomal protein bS6 family.

In terms of biological role, binds together with bS18 to 16S ribosomal RNA. This is Small ribosomal subunit protein bS6 from Prochlorococcus marinus (strain NATL1A).